Here is a 115-residue protein sequence, read N- to C-terminus: Glutaredoxin-like protein C5orf63 homolog (115 aa).

Cys40 and Cys43 are disulfide-bonded.

This sequence belongs to the glutaredoxin family. YDR286C subfamily.

In Mus musculus (Mouse), this protein is Glutaredoxin-like protein C5orf63 homolog.